Consider the following 66-residue polypeptide: Large ribosomal subunit protein uL29 (66 aa).

It belongs to the universal ribosomal protein uL29 family.

The sequence is that of Large ribosomal subunit protein uL29 (rpmC) from Helicobacter pylori (strain J99 / ATCC 700824) (Campylobacter pylori J99).